A 477-amino-acid chain; its full sequence is uncharacterized protein (477 aa).

An N-terminal signal peptide occupies residues 1 to 18 (MWTALVLVWISSVPLSRS). The Extracellular portion of the chain corresponds to 19 to 427 (HTVPAVPRHL…DPLTPSLVNK (409 aa)). Asn-40, Asn-51, and Asn-77 each carry an N-linked (GlcNAc...) asparagine glycan. Disordered regions lie at residues 79–103 (TRVTAETTPHGTNTSTPTTREGTAD), 239–366 (GTIN…TGGP), and 378–398 (KATAGTASAGPTSRSSGDVKV). Over residues 85-97 (TTPHGTNTSTPTT) the composition is skewed to low complexity. Polar residues-rich tracts occupy residues 253 to 288 (PAKSTPTNTSSRNPIPTSGAQTQGTTIQVTTDQPVH) and 298 to 309 (PSNTTLEPNTPK). Residue Asn-300 is glycosylated (N-linked (GlcNAc...) asparagine). Composition is skewed to low complexity over residues 310–326 (SVASTSSAVVTTTQVQT), 348–361 (TSPTTQPSPLLPTQ), and 378–393 (KATAGTASAGPTSRSS). A helical membrane pass occupies residues 428–448 (MFLLVVLIVGVTLFIAVLMMF). The Cytoplasmic segment spans residues 449–477 (ALQAYESYKKKDYTQVDYLINGMYADSEM).

The protein resides in the cell membrane. The protein localises to the golgi apparatus. It is found in the trans-Golgi network membrane. This is an uncharacterized protein from Rattus norvegicus (Rat).